We begin with the raw amino-acid sequence, 228 residues long: MSKKAFFITGTDTDAGKTLVATGLLAAARLRGLSTLGLKPVAAGCTRTEQGLRNSDALALQAQSTLPVVYEQVNPVALEAAIAPHIAALQEKRSLSADRLAGFCRSSLRQADFTLVEGAGGWRVPLNPSETLANLAQLLRLPVVLVVGMRLGCINHALLTVEAIRNDGLPLVGWVANVLDADMPVLEENIASLAQRIPAPCLGVVPRLSMASADAASAHLDLTPLLDA.

14–19 is an ATP binding site; the sequence is DAGKTL. Thr-18 contacts Mg(2+). Lys-39 is a catalytic residue. Residues Asp-56, 117 to 120, and 206 to 208 contribute to the ATP site; these read EGAG and PRL. 2 residues coordinate Mg(2+): Asp-56 and Glu-117.

This sequence belongs to the dethiobiotin synthetase family. Homodimer. It depends on Mg(2+) as a cofactor.

The protein localises to the cytoplasm. It catalyses the reaction (7R,8S)-7,8-diammoniononanoate + CO2 + ATP = (4R,5S)-dethiobiotin + ADP + phosphate + 3 H(+). Its pathway is cofactor biosynthesis; biotin biosynthesis; biotin from 7,8-diaminononanoate: step 1/2. In terms of biological role, catalyzes a mechanistically unusual reaction, the ATP-dependent insertion of CO2 between the N7 and N8 nitrogen atoms of 7,8-diaminopelargonic acid (DAPA, also called 7,8-diammoniononanoate) to form a ureido ring. The polypeptide is ATP-dependent dethiobiotin synthetase BioD (Cellvibrio japonicus (strain Ueda107) (Pseudomonas fluorescens subsp. cellulosa)).